Reading from the N-terminus, the 264-residue chain is Phosphatidylinositol transfer protein 1 (264 aa).

Residues 151-174 (NYKETEDPTKIRSEKANRGPLEEE) form a disordered region. Residues 238-264 (VRAFELKTKEDLKKKLEEKDENKAAEK) are a coiled coil.

This sequence belongs to the PtdIns transfer protein family. PI transfer class I subfamily. Post-translationally, phosphorylated in response to activation of rasG.

The protein resides in the cytoplasm. Its subcellular location is the golgi apparatus. In terms of biological role, catalyzes the transfer of PtdIns and phosphatidylcholine between membranes. This chain is Phosphatidylinositol transfer protein 1 (pitA), found in Dictyostelium discoideum (Social amoeba).